A 208-amino-acid polypeptide reads, in one-letter code: Imidazoleglycerol-phosphate dehydratase (208 aa).

The protein belongs to the imidazoleglycerol-phosphate dehydratase family.

It localises to the cytoplasm. The catalysed reaction is D-erythro-1-(imidazol-4-yl)glycerol 3-phosphate = 3-(imidazol-4-yl)-2-oxopropyl phosphate + H2O. It functions in the pathway amino-acid biosynthesis; L-histidine biosynthesis; L-histidine from 5-phospho-alpha-D-ribose 1-diphosphate: step 6/9. The sequence is that of Imidazoleglycerol-phosphate dehydratase from Prochlorococcus marinus (strain MIT 9211).